A 621-amino-acid chain; its full sequence is Chaperone protein HscA homolog (621 aa).

It belongs to the heat shock protein 70 family.

In terms of biological role, chaperone involved in the maturation of iron-sulfur cluster-containing proteins. Has a low intrinsic ATPase activity which is markedly stimulated by HscB. The sequence is that of Chaperone protein HscA homolog from Cupriavidus metallidurans (strain ATCC 43123 / DSM 2839 / NBRC 102507 / CH34) (Ralstonia metallidurans).